A 188-amino-acid polypeptide reads, in one-letter code: dCTP deaminase (188 aa).

DCTP contacts are provided by residues 111 to 116, 135 to 137, glutamine 156, tyrosine 170, and glutamine 180; these read KSTYAR and TLE. Residue glutamate 137 is the Proton donor/acceptor of the active site.

This sequence belongs to the dCTP deaminase family. As to quaternary structure, homotrimer.

The enzyme catalyses dCTP + H2O + H(+) = dUTP + NH4(+). Its pathway is pyrimidine metabolism; dUMP biosynthesis; dUMP from dCTP (dUTP route): step 1/2. In terms of biological role, catalyzes the deamination of dCTP to dUTP. In Dechloromonas aromatica (strain RCB), this protein is dCTP deaminase.